Reading from the N-terminus, the 364-residue chain is UDP-N-acetylglucosamine--N-acetylmuramyl-(pentapeptide) pyrophosphoryl-undecaprenol N-acetylglucosamine transferase (364 aa).

UDP-N-acetyl-alpha-D-glucosamine is bound by residues 19–21 (TGG), asparagine 131, arginine 167, serine 195, isoleucine 250, and glutamine 295.

Belongs to the glycosyltransferase 28 family. MurG subfamily.

Its subcellular location is the cell inner membrane. It carries out the reaction di-trans,octa-cis-undecaprenyl diphospho-N-acetyl-alpha-D-muramoyl-L-alanyl-D-glutamyl-meso-2,6-diaminopimeloyl-D-alanyl-D-alanine + UDP-N-acetyl-alpha-D-glucosamine = di-trans,octa-cis-undecaprenyl diphospho-[N-acetyl-alpha-D-glucosaminyl-(1-&gt;4)]-N-acetyl-alpha-D-muramoyl-L-alanyl-D-glutamyl-meso-2,6-diaminopimeloyl-D-alanyl-D-alanine + UDP + H(+). It functions in the pathway cell wall biogenesis; peptidoglycan biosynthesis. Its function is as follows. Cell wall formation. Catalyzes the transfer of a GlcNAc subunit on undecaprenyl-pyrophosphoryl-MurNAc-pentapeptide (lipid intermediate I) to form undecaprenyl-pyrophosphoryl-MurNAc-(pentapeptide)GlcNAc (lipid intermediate II). The sequence is that of UDP-N-acetylglucosamine--N-acetylmuramyl-(pentapeptide) pyrophosphoryl-undecaprenol N-acetylglucosamine transferase from Xylella fastidiosa (strain Temecula1 / ATCC 700964).